We begin with the raw amino-acid sequence, 369 residues long: Deoxyhypusine synthase (369 aa).

Serine 78 carries the phosphoserine modification. NAD(+)-binding positions include 105-109, 131-133, glutamate 137, and aspartate 238; these read SNLIS and TAG. 136 to 137 contributes to the spermidine binding site; the sequence is EE. Aspartate 243 is a spermidine binding site. Glycine 283 is a binding site for NAD(+). Histidine 288 lines the spermidine pocket. Residue 308–309 coordinates NAD(+); it reads TA. Residues 314 to 316 and 323 to 329 contribute to the spermidine site; these read GSD and EAVSWGK. Lysine 329 acts as the Nucleophile in catalysis. 342–343 contacts NAD(+); sequence DA.

Belongs to the deoxyhypusine synthase family. Homotetramer formed by a dimer of dimers. NAD(+) is required as a cofactor.

It catalyses the reaction [eIF5A protein]-L-lysine + spermidine = [eIF5A protein]-deoxyhypusine + propane-1,3-diamine. It participates in protein modification; eIF5A hypusination. Catalyzes the NAD-dependent oxidative cleavage of spermidine and the subsequent transfer of the butylamine moiety of spermidine to the epsilon-amino group of a critical lysine residue of the eIF-5A precursor protein to form the intermediate deoxyhypusine residue. This is the first step of the post-translational modification of that lysine into an unusual amino acid residue named hypusine. Hypusination is unique to mature eIF-5A factor and is essential for its function. The chain is Deoxyhypusine synthase (DHPS) from Homo sapiens (Human).